A 328-amino-acid chain; its full sequence is Octanoyltransferase, mitochondrial (328 aa).

The region spanning 108–312 is the BPL/LPL catalytic domain; that stretch reads MKPNPIILTF…EMTKLLGIKT (205 aa). Substrate contacts are provided by residues 162–169, 241–243, and 254–256; these read RGGQVTFH, SVG, and GVA. The active-site Acyl-thioester intermediate is cysteine 272.

The protein belongs to the LipB family.

The protein resides in the mitochondrion. It catalyses the reaction octanoyl-[ACP] + L-lysyl-[protein] = N(6)-octanoyl-L-lysyl-[protein] + holo-[ACP] + H(+). It participates in protein modification; protein lipoylation via endogenous pathway; protein N(6)-(lipoyl)lysine from octanoyl-[acyl-carrier-protein]: step 1/2. In terms of biological role, catalyzes the transfer of endogenously produced octanoic acid from octanoyl-acyl-carrier-protein onto the lipoyl domains of lipoate-dependent enzymes. Lipoyl-ACP can also act as a substrate although octanoyl-ACP is likely to be the physiological substrate. The polypeptide is Octanoyltransferase, mitochondrial (LIP2) (Saccharomyces cerevisiae (strain ATCC 204508 / S288c) (Baker's yeast)).